Here is a 370-residue protein sequence, read N- to C-terminus: tRNA-specific 2-thiouridylase MnmA (370 aa).

ATP contacts are provided by residues 24-31 (AMSGGVDS) and Leu-50. The active-site Nucleophile is the Cys-119. Cys-119 and Cys-215 form a disulfide bridge. Residue Gly-143 participates in ATP binding. The interval 165 to 167 (KDQ) is interaction with tRNA. The active-site Cysteine persulfide intermediate is the Cys-215.

The protein belongs to the MnmA/TRMU family.

The protein localises to the cytoplasm. It catalyses the reaction S-sulfanyl-L-cysteinyl-[protein] + uridine(34) in tRNA + AH2 + ATP = 2-thiouridine(34) in tRNA + L-cysteinyl-[protein] + A + AMP + diphosphate + H(+). In terms of biological role, catalyzes the 2-thiolation of uridine at the wobble position (U34) of tRNA, leading to the formation of s(2)U34. The sequence is that of tRNA-specific 2-thiouridylase MnmA from Wolbachia pipientis wMel.